The chain runs to 639 residues: MAEFDSKVPVSGMNNHVFEACHHVVKALRASDNNLDANLRKLLSDLEMHLSTFGIADTKVEDAGFSEIKKRFKEAVKRIRSWETNQSTMFEAGLSEADQFFQALYDVQTVLVGFKALPMKTNQMEKDVYNQATVALDIAMLRLEKELCDVLHQHKRHVQPDYLAVSSRRKDIVYDESFVSLDDEVIVEASSHEDDEQISDFYNSDLVDPIVLPHIKAIANAMFACEYDQPFCEAFIGVQREALEEYMVTLEMERFSCVDVLRMDWEDLNGAMRKWTKVVKIITQVYLASEKQLCDQILGDFESISTACFIEISKDAILSLLNFGEAVVLRSCKPEMLERFLSMYEVSAEILVDVDNLFPDETGSSLRIAFHNLSKKLADHTTTTFLKFKDAIASDESTRPFHGGGIHHLTRYVMNYLKLLPEYTDSLNSLLQNIHVDDSIPEKTGEDVLPSTFSPMARHLRSIVTTLESSLERKAQLYADEALKSIFLMNNFRYMVQKVKGSELRRLFGDEWIRKHIASYQCNVTNYERSTWSSILALLRDNNDSVRTLRERCRLFSLAFDDVYKNQTRWSVPDSELRDDLHISTSVKVVQSYRGFLGRNAVRIGEKHIRYTCEDIENMLLDLFECLPSPRSLRSSRKR.

Belongs to the EXO70 family. Component of the exocyst complex and of the exocyst-positive organelle (EXPO). Interacts with SEC6, SEC10A and SEC10B. Expressed in roots, in the root-hair zone, both in root hair and nonhair cells.

It localises to the secreted. Its subcellular location is the extracellular exosome. The protein resides in the cell membrane. The protein localises to the cytoplasm. It is found in the endomembrane system. In terms of biological role, influences the subcellular localization patterns of other exocyst complex proteins (e.g. SEC5A, SEC15A, SEC15B and EXO84B) leading to their recruitment to exocyst, well-defined large punctate structures throughout the cytosol. Essential component for the formation and the recruitment of exocyst subunits to the exocyst-positive organelle (EXPO), a secreted double membrane structure also called extracellular exosome, that acts as a sequester for cytosolic proteins to release them into the apoplast. The protein is Exocyst complex component EXO70E2 of Arabidopsis thaliana (Mouse-ear cress).